The sequence spans 359 residues: UPF0283 membrane protein Atu1356 (359 aa).

Positions 1–39 are disordered; sequence MKAPTQNDPQTRRPAAFTLETEEAARPSATQKRAPRSFD. A run of 2 helical transmembrane segments spans residues 75–95 and 108–128; these read FGKL…GLWA and WLGY…LALV.

It belongs to the UPF0283 family.

Its subcellular location is the cell inner membrane. The protein is UPF0283 membrane protein Atu1356 of Agrobacterium fabrum (strain C58 / ATCC 33970) (Agrobacterium tumefaciens (strain C58)).